We begin with the raw amino-acid sequence, 130 residues long: Small ribosomal subunit protein uS8 (130 aa).

Belongs to the universal ribosomal protein uS8 family. Part of the 30S ribosomal subunit. Contacts proteins S5 and S12.

Functionally, one of the primary rRNA binding proteins, it binds directly to 16S rRNA central domain where it helps coordinate assembly of the platform of the 30S subunit. The protein is Small ribosomal subunit protein uS8 of Aliivibrio salmonicida (strain LFI1238) (Vibrio salmonicida (strain LFI1238)).